A 485-amino-acid chain; its full sequence is Isocitrate dehydrogenase [NADP], chloroplastic/mitochondrial (485 aa).

The N-terminal 65 residues, 1-65 (MLNKLTHGVF…VQFHRASAVR (65 aa)), are a transit peptide targeting the chloroplast and mitochondrion. Residues 147–149 (TIT) and arginine 154 contribute to the NADP(+) site. Threonine 149 lines the substrate pocket. Residues 166–172 (SPNGTIR), arginine 181, and arginine 204 contribute to the substrate site. Residue aspartate 323 coordinates Mn(2+). Residue lysine 331 participates in NADP(+) binding. Aspartate 346 contacts Mn(2+). NADP(+) is bound by residues 381 to 386 (GTVTRH) and asparagine 399.

Belongs to the isocitrate and isopropylmalate dehydrogenases family. It depends on Mg(2+) as a cofactor. Mn(2+) is required as a cofactor.

The protein localises to the plastid. It localises to the chloroplast. The protein resides in the mitochondrion. The catalysed reaction is D-threo-isocitrate + NADP(+) = 2-oxoglutarate + CO2 + NADPH. Its function is as follows. May be involved in response to oxidative stresses. The sequence is that of Isocitrate dehydrogenase [NADP], chloroplastic/mitochondrial from Arabidopsis thaliana (Mouse-ear cress).